A 297-amino-acid polypeptide reads, in one-letter code: 4-hydroxy-tetrahydrodipicolinate synthase (297 aa).

Residue Thr55 participates in pyruvate binding. The active-site Proton donor/acceptor is the Tyr144. The active-site Schiff-base intermediate with substrate is the Lys172. Position 213 (Ile213) interacts with pyruvate.

It belongs to the DapA family. In terms of assembly, homotetramer; dimer of dimers.

The protein resides in the cytoplasm. The catalysed reaction is L-aspartate 4-semialdehyde + pyruvate = (2S,4S)-4-hydroxy-2,3,4,5-tetrahydrodipicolinate + H2O + H(+). It functions in the pathway amino-acid biosynthesis; L-lysine biosynthesis via DAP pathway; (S)-tetrahydrodipicolinate from L-aspartate: step 3/4. Catalyzes the condensation of (S)-aspartate-beta-semialdehyde [(S)-ASA] and pyruvate to 4-hydroxy-tetrahydrodipicolinate (HTPA). The protein is 4-hydroxy-tetrahydrodipicolinate synthase of Lactococcus lactis subsp. lactis (strain IL1403) (Streptococcus lactis).